The sequence spans 420 residues: Glutamate dehydrogenase (420 aa).

Lys-105 is a catalytic residue. Gly-220–Tyr-226 is an NAD(+) binding site.

It belongs to the Glu/Leu/Phe/Val dehydrogenases family. As to quaternary structure, homohexamer.

Its subcellular location is the cytoplasm. The catalysed reaction is L-glutamate + NAD(+) + H2O = 2-oxoglutarate + NH4(+) + NADH + H(+). It carries out the reaction L-glutamate + NADP(+) + H2O = 2-oxoglutarate + NH4(+) + NADPH + H(+). This chain is Glutamate dehydrogenase (gdhA), found in Pyrococcus horikoshii (strain ATCC 700860 / DSM 12428 / JCM 9974 / NBRC 100139 / OT-3).